A 185-amino-acid polypeptide reads, in one-letter code: Alkyl hydroperoxide reductase AhpD (185 aa).

Cys131 (proton donor) is an active-site residue. Residues Cys131 and Cys134 are joined by a disulfide bond. Cys134 serves as the catalytic Cysteine sulfenic acid (-SOH) intermediate.

Belongs to the AhpD family. Homotrimer.

The catalysed reaction is N(6)-[(R)-dihydrolipoyl]-L-lysyl-[lipoyl-carrier protein] + a hydroperoxide = N(6)-[(R)-lipoyl]-L-lysyl-[lipoyl-carrier protein] + an alcohol + H2O. In terms of biological role, antioxidant protein with alkyl hydroperoxidase activity. Required for the reduction of the AhpC active site cysteine residues and for the regeneration of the AhpC enzyme activity. The protein is Alkyl hydroperoxide reductase AhpD of Frankia alni (strain DSM 45986 / CECT 9034 / ACN14a).